The chain runs to 187 residues: Small ribosomal subunit protein uS5 (187 aa).

The interval 1 to 20 is disordered; the sequence is MAERENRRDRRDDRSREETP. In terms of domain architecture, S5 DRBM spans 22 to 85; that stretch reads FADRLVAINR…EQAKRQMIRV (64 aa).

It belongs to the universal ribosomal protein uS5 family. As to quaternary structure, part of the 30S ribosomal subunit. Contacts proteins S4 and S8.

Functionally, with S4 and S12 plays an important role in translational accuracy. In terms of biological role, located at the back of the 30S subunit body where it stabilizes the conformation of the head with respect to the body. The chain is Small ribosomal subunit protein uS5 from Cereibacter sphaeroides (strain ATCC 17029 / ATH 2.4.9) (Rhodobacter sphaeroides).